A 170-amino-acid chain; its full sequence is MLSFVVMSFLIFVIVMVNEHKAHLSVIQKMILAVVNGSITIILSIIVFYIFYPQNISLFLITAGILTVFVFLYGLLLFLFGFTHRELSYLSKYDKYKFLCKFTIEMFSSLTNHAFLTISAIVLYQIQHPKPTIDFIVMIGMITISVIVVMLLFLKTYSIIIKQLKKLENN.

The next 3 helical transmembrane spans lie at 31 to 51, 58 to 78, and 133 to 153; these read ILAV…FYIF, LFLI…LLLF, and IDFI…MLLF.

To M.jannaschii MJ0554 and MJ0587.

It is found in the cell membrane. This is an uncharacterized protein from Methanocaldococcus jannaschii (strain ATCC 43067 / DSM 2661 / JAL-1 / JCM 10045 / NBRC 100440) (Methanococcus jannaschii).